Reading from the N-terminus, the 553-residue chain is Peroxiredoxin-2A (553 aa).

The 157-residue stretch at 4–160 (IDVGDFVPDG…LMKMTTTTMS (157 aa)) folds into the Thioredoxin domain. Cys51 acts as the Cysteine sulfenic acid (-SOH) intermediate in catalysis. The F-box domain maps to 156 to 201 (TTTMSNLPTDLLEEIISRVPRKYMRAVRLTCKRWNGMFKSQSFTKM).

Belongs to the peroxiredoxin family. Prx5 subfamily. As to quaternary structure, monomer.

It carries out the reaction [glutaredoxin]-dithiol + a hydroperoxide = [glutaredoxin]-disulfide + an alcohol + H2O. Thiol-specific peroxidase that catalyzes the reduction of hydrogen peroxide and organic hydroperoxides to water and alcohols, respectively. Plays a role in cell protection against oxidative stress by detoxifying peroxides. May be involved in intracellular redox signaling. This chain is Peroxiredoxin-2A (PRXIIA), found in Arabidopsis thaliana (Mouse-ear cress).